The sequence spans 759 residues: Protein YdeP (759 aa).

2 residues coordinate [4Fe-4S] cluster: C49 and C52.

It belongs to the prokaryotic molybdopterin-containing oxidoreductase family. Requires [4Fe-4S] cluster as cofactor. The cofactor is Mo-bis(molybdopterin guanine dinucleotide).

In terms of biological role, probably involved in acid resistance. This chain is Protein YdeP (ydeP), found in Escherichia coli (strain K12).